Here is a 464-residue protein sequence, read N- to C-terminus: MSRIETDSLGPVEVPEDAYWGAQTQRSLINFAIGKERMPLAVLHALALIKKAAARVNDRNGDLPADIARLIEQAADEVLDGQHDDQFPLVVWQTGSGTQSNMNVNEVIAGRANELAGKGRGGKAPVHPNDHVNRSQSSNDCFPTAMHIAAAQAVHEKLLPAVTELSSGLAELSMRHHKLVKTGRTHMMDATPITFGQEVSAFVAQLDYAQRAIRATLPAVCELAQGGTAVGTGLNAPQGFAEAIAAELAALSGLPFITAPNKFAALAGHEPLTSLAGALKTLAVALMKIANDLRLLGSGPRAGLAEVRLPANEPGSSIMPGKVNPTQCEALSMLACQVLGNDAAIGFAASQGHLQLNVFKPVIIHNLLQSIELLADGCRNFQQHCVAGIEPDAEQMAAHLERGLMLVTALNPHIGYDKAAEIAKKAYSEGTTLREAALALKYLTNEQFDQWVRPENMLAPGGKG.

Substrate contacts are provided by residues 96-98, 127-130, 137-139, and threonine 185; these read SGT, HPND, and SSN. Histidine 186 functions as the Proton donor/acceptor in the catalytic mechanism. Serine 316 is an active-site residue. Substrate-binding positions include serine 317 and 322–324; that span reads KVN.

This sequence belongs to the class-II fumarase/aspartase family. Fumarase subfamily. As to quaternary structure, homotetramer.

The protein resides in the cytoplasm. The catalysed reaction is (S)-malate = fumarate + H2O. It functions in the pathway carbohydrate metabolism; tricarboxylic acid cycle; (S)-malate from fumarate: step 1/1. Its function is as follows. Involved in the TCA cycle. Catalyzes the stereospecific interconversion of fumarate to L-malate. This Pseudomonas putida (strain ATCC 47054 / DSM 6125 / CFBP 8728 / NCIMB 11950 / KT2440) protein is Fumarate hydratase class II.